A 125-amino-acid polypeptide reads, in one-letter code: Small ribosomal subunit protein uS12m (125 aa).

2 disordered regions span residues 1 to 23 (MPTL…RTRA) and 104 to 125 (LMGI…PKSI). Residues 10-23 (HGREEKRRTDRTRA) are compositionally biased toward basic and acidic residues.

This sequence belongs to the universal ribosomal protein uS12 family.

The protein resides in the mitochondrion. Functionally, protein S12 is involved in the translation initiation step. This Raphanus sativus (Radish) protein is Small ribosomal subunit protein uS12m (RPS12).